The sequence spans 441 residues: CBL-interacting serine/threonine-protein kinase 6 (441 aa).

The 255-residue stretch at 24-278 (YELGRLLGHG…IEKVMDSPWF (255 aa)) folds into the Protein kinase domain. ATP-binding positions include 30 to 38 (LGHGTFAKV) and lysine 53. Aspartate 146 functions as the Proton acceptor in the catalytic mechanism. The activation loop stretch occupies residues 164-193 (DFGLSAFTEHLKQDGLLHTTCGTPAYVAPE). Serine 168 carries the post-translational modification Phosphoserine. Phosphothreonine is present on threonine 182. Positions 310 to 334 (EETETLNAFHIIALSEGFDLSPLFE) constitute an NAF domain. The tract at residues 341–371 (KREMRFATSRPASSVISSLEEAARVGNKFDV) is PPI.

It belongs to the protein kinase superfamily. CAMK Ser/Thr protein kinase family. SNF1 subfamily. Part of a K(+)-channel calcium-sensing kinase/phosphatase complex composed by a calcium sensor CBL (CBL1, CBL2, CBL3 or CBL9), a kinase CIPK (CIPK6, CIPK16 or CIPK23), a phosphatase PP2C (AIP1) and a K(+)-channel (AKT1). Interacts with AKT1, AKT2,CBL1, CBL2, CBL3, CBL4/SOS3 and CBL9. Mn(2+) is required as a cofactor. Post-translationally, autophosphorylated. Expressed in roots and shoots.

The protein resides in the endoplasmic reticulum. It carries out the reaction L-seryl-[protein] + ATP = O-phospho-L-seryl-[protein] + ADP + H(+). The enzyme catalyses L-threonyl-[protein] + ATP = O-phospho-L-threonyl-[protein] + ADP + H(+). CIPK serine-threonine protein kinases interact with CBL proteins. Binding of a CBL protein to the regulatory NAF domain of CIPK protein lead to the activation of the kinase in a calcium-dependent manner. Downstream of CBL1, CBL2, CBL3 and CBL9, regulates by phosphorylation the K(+) conductance and uptake of AKT1. Binds to CBL4 to modulate AKT2 activity by promoting a kinase interaction-dependent but phosphorylation-independent translocation of the channel to the plasma membrane. The protein is CBL-interacting serine/threonine-protein kinase 6 (CIPK6) of Arabidopsis thaliana (Mouse-ear cress).